The primary structure comprises 178 residues: Sec-independent protein translocase protein TatB (178 aa).

A helical membrane pass occupies residues 2-22 (LPEIGAAELLIIAAVALIVVG). The segment at 104-178 (HSPTGYENTV…KARKTAGSAE (75 aa)) is disordered. Positions 114–131 (EPPPPEPEPQPAAEPAPK) are enriched in pro residues. The segment covering 141–154 (PKAAAAPKAAAKPK) has biased composition (low complexity).

The protein belongs to the TatB family. In terms of assembly, the Tat system comprises two distinct complexes: a TatABC complex, containing multiple copies of TatA, TatB and TatC subunits, and a separate TatA complex, containing only TatA subunits. Substrates initially bind to the TatABC complex, which probably triggers association of the separate TatA complex to form the active translocon.

The protein resides in the cell inner membrane. Part of the twin-arginine translocation (Tat) system that transports large folded proteins containing a characteristic twin-arginine motif in their signal peptide across membranes. Together with TatC, TatB is part of a receptor directly interacting with Tat signal peptides. TatB may form an oligomeric binding site that transiently accommodates folded Tat precursor proteins before their translocation. This Phenylobacterium zucineum (strain HLK1) protein is Sec-independent protein translocase protein TatB.